The sequence spans 145 residues: Transcriptional regulator MraZ (145 aa).

SpoVT-AbrB domains lie at 5–49 and 78–121; these read TYNH…LESE and TYKV…AKEV.

It belongs to the MraZ family. Forms oligomers.

Its subcellular location is the cytoplasm. It is found in the nucleoid. This is Transcriptional regulator MraZ from Ureaplasma urealyticum serovar 10 (strain ATCC 33699 / Western).